The chain runs to 115 residues: Protamine-2 (115 aa).

The interval 1–115 (MVRCHVKSPT…RRRRRCGRQL (115 aa)) is disordered. S8 is subject to Phosphoserine. Positions 24 to 38 (ETEHPDQARELRPED) are enriched in basic and acidic residues. 2 stretches are compositionally biased toward basic residues: residues 44 to 79 (RTHR…RRRG) and 102 to 115 (RRMR…GRQL).

The protein belongs to the protamine P2 family. In terms of assembly, interacts with TDRP. In terms of processing, proteolytic processing into mature chains is required for histone eviction during spermatogenesis. Transition proteins (TNP1 and TNP2) are required for processing. In terms of tissue distribution, testis.

The protein localises to the nucleus. It is found in the chromosome. Protamines substitute for histones in the chromatin of sperm during the haploid phase of spermatogenesis. They compact sperm DNA into a highly condensed, stable and inactive complex. The protein is Protamine-2 (PRM2) of Bos taurus (Bovine).